Consider the following 263-residue polypeptide: MIKNQYINSDESVFNDAKALFNLNKNILLKGPTGSGKTKLAETLSAAVNTPMHQVNCSVDLDAESLLGFKTIKTNEQGQQEIVFIDGPVIKAMREGHILYIDEINMAKPETLPILNGVLDYRRQLTNPFTGEVIKAAPGFNVIAAINEGYVGTLPMNEALKNRFVVIQVDYIDGDILKDVIKQQSQLQDDAIIEQIIKFNEDLRTMSKQGQISEEAASIRALIDLSDLITVMPIERAIKRTIIDKLEDEREQQAIKNAIELNF.

31–38 (GPTGSGKT) is a binding site for ATP.

The protein belongs to the CbbQ/NirQ/NorQ/GpvN family.

This is an uncharacterized protein from Staphylococcus haemolyticus (strain JCSC1435).